The following is a 119-amino-acid chain: MTLDDIENNNNDHGQFMPMYDEGVNFPSYSNNFQPLKIEKNDKEDRQVTCSIVLFVLGFLLLIPWIINVINIKSKNKMARGFSIASVVLFSLSIAIIVIFVIFFIFLITSLHNSHREDR.

2 consecutive transmembrane segments (helical) span residues 52–72 (IVLF…VINI) and 88–108 (VLFS…IFLI).

The protein localises to the membrane. This is an uncharacterized protein from Dictyostelium discoideum (Social amoeba).